Consider the following 424-residue polypeptide: Histidine--tRNA ligase (424 aa).

Belongs to the class-II aminoacyl-tRNA synthetase family. Homodimer.

The protein resides in the cytoplasm. The catalysed reaction is tRNA(His) + L-histidine + ATP = L-histidyl-tRNA(His) + AMP + diphosphate + H(+). In Shigella boydii serotype 18 (strain CDC 3083-94 / BS512), this protein is Histidine--tRNA ligase.